Reading from the N-terminus, the 278-residue chain is Ribosomal RNA small subunit methyltransferase A (278 aa).

S-adenosyl-L-methionine-binding residues include Asn28, Leu30, Gly55, Glu77, Asp103, and Asn122.

This sequence belongs to the class I-like SAM-binding methyltransferase superfamily. rRNA adenine N(6)-methyltransferase family. RsmA subfamily.

It localises to the cytoplasm. It catalyses the reaction adenosine(1518)/adenosine(1519) in 16S rRNA + 4 S-adenosyl-L-methionine = N(6)-dimethyladenosine(1518)/N(6)-dimethyladenosine(1519) in 16S rRNA + 4 S-adenosyl-L-homocysteine + 4 H(+). In terms of biological role, specifically dimethylates two adjacent adenosines (A1518 and A1519) in the loop of a conserved hairpin near the 3'-end of 16S rRNA in the 30S particle. May play a critical role in biogenesis of 30S subunits. The protein is Ribosomal RNA small subunit methyltransferase A of Cereibacter sphaeroides (strain ATCC 17023 / DSM 158 / JCM 6121 / CCUG 31486 / LMG 2827 / NBRC 12203 / NCIMB 8253 / ATH 2.4.1.) (Rhodobacter sphaeroides).